The primary structure comprises 294 residues: MSELLTKKISAFIITKNEAARIERAINSVKNIADEVIVVDSESTDKTVIIAESLGAKVVVKPWLGYVGQKSFAETICKNDWILNIDADEELSKELQDEIEYIFASQNQDRYLAYQIKLLIMHRNDTRPRIFAPYNKCTRLYNKKFASFANTINSTTHDSVVFNKDVDFANKIYTLNEAAYHYSGTSIEQLVAKANFYSGEQAKDLIKQGKKPSNIRIATEMIWWFFKAFFIRRYFVFGFDGFVDSMIFAFARFLRLAKLRELSLQCNPATRSQDLKTQFVIQDPVDKPRDDNIV.

Belongs to the glycosyltransferase 2 family. WaaE/KdtX subfamily.

This is an uncharacterized protein from Rickettsia bellii (strain RML369-C).